The sequence spans 678 residues: Dol-P-Man:Man(7)GlcNAc(2)-PP-Dol alpha-1,6-mannosyltransferase (678 aa).

The next 11 helical transmembrane spans lie at 1–21 (MDIL…FTKV), 56–76 (FIGP…FETL), 81–101 (FWAQ…AWNS), 109–129 (IYGV…FHFM), 133–153 (TRPL…AYWL), 168–188 (ILVF…VSLL), 200–220 (VALP…SFFW), 252–272 (FYSA…IGVA), 279–299 (PLVL…HKEL), 301–321 (FIIY…QRIW), and 334–354 (ALAC…LLVI).

Belongs to the glycosyltransferase 22 family.

The protein localises to the endoplasmic reticulum membrane. The enzyme catalyses an alpha-D-Man-(1-&gt;2)-alpha-D-Man-(1-&gt;2)-alpha-D-Man-(1-&gt;3)-[alpha-D-Man-(1-&gt;2)-alpha-D-Man-(1-&gt;3)-alpha-D-Man-(1-&gt;6)]-beta-D-Man-(1-&gt;4)-beta-D-GlcNAc-(1-&gt;4)-alpha-D-GlcNAc-diphospho-di-trans,poly-cis-dolichol + a di-trans,poly-cis-dolichyl beta-D-mannosyl phosphate = an alpha-D-Man-(1-&gt;2)-alpha-D-Man-(1-&gt;2)-alpha-D-Man-(1-&gt;3)-[alpha-D-Man-(1-&gt;2)-alpha-D-Man-(1-&gt;3)-[alpha-D-Man-(1-&gt;6)]-alpha-D-Man-(1-&gt;6)]-beta-D-Man-(1-&gt;4)-beta-D-GlcNAc-(1-&gt;4)-alpha-D-GlcNAc-diphospho-di-trans,poly-cis-dolichol + a di-trans,poly-cis-dolichyl phosphate + H(+). It participates in protein modification; protein glycosylation. Its function is as follows. Mannosyltransferase that operates in the biosynthetic pathway of dolichol-linked oligosaccharides, the glycan precursors employed in protein asparagine (N)-glycosylation. The assembly of dolichol-linked oligosaccharides begins on the cytosolic side of the endoplasmic reticulum membrane and finishes in its lumen. The sequential addition of sugars to dolichol pyrophosphate produces dolichol-linked oligosaccharides containing fourteen sugars, including two GlcNAcs, nine mannoses and three glucoses. Once assembled, the oligosaccharide is transferred from the lipid to nascent proteins by oligosaccharyltransferases. In the lumen of the endoplasmic reticulum, adds the eighth mannose residue in an alpha-1,6 linkage onto Man(7)GlcNAc(2)-PP-dolichol to produce Man(8)GlcNAc(2)-PP-dolichol. This is Dol-P-Man:Man(7)GlcNAc(2)-PP-Dol alpha-1,6-mannosyltransferase from Drosophila melanogaster (Fruit fly).